Consider the following 385-residue polypeptide: Glutamate 5-kinase (385 aa).

ATP is bound at residue K17. Residues S64, D151, and N165 each contribute to the substrate site. ATP is bound at residue 185 to 186 (SD). Residues 291–367 (SGTVRVDAGA…NQIDNILGYN (77 aa)) enclose the PUA domain.

This sequence belongs to the glutamate 5-kinase family.

It localises to the cytoplasm. It catalyses the reaction L-glutamate + ATP = L-glutamyl 5-phosphate + ADP. The protein operates within amino-acid biosynthesis; L-proline biosynthesis; L-glutamate 5-semialdehyde from L-glutamate: step 1/2. In terms of biological role, catalyzes the transfer of a phosphate group to glutamate to form L-glutamate 5-phosphate. This chain is Glutamate 5-kinase, found in Methanosarcina acetivorans (strain ATCC 35395 / DSM 2834 / JCM 12185 / C2A).